We begin with the raw amino-acid sequence, 879 residues long: uncharacterized protein (879 aa).

A helical membrane pass occupies residues 14–34 (LAFFGCGVSVGAFFTLFLMGT).

It is found in the membrane. This is an uncharacterized protein from Mycoplasma pneumoniae (strain ATCC 29342 / M129 / Subtype 1) (Mycoplasmoides pneumoniae).